A 209-amino-acid polypeptide reads, in one-letter code: Orotate phosphoribosyltransferase (209 aa).

Residues Arg-96, Lys-100, His-102, and Glu-122–Ser-130 contribute to the 5-phospho-alpha-D-ribose 1-diphosphate site. Ser-126 is a binding site for orotate.

Belongs to the purine/pyrimidine phosphoribosyltransferase family. PyrE subfamily. As to quaternary structure, homodimer. Requires Mg(2+) as cofactor.

The enzyme catalyses orotidine 5'-phosphate + diphosphate = orotate + 5-phospho-alpha-D-ribose 1-diphosphate. It participates in pyrimidine metabolism; UMP biosynthesis via de novo pathway; UMP from orotate: step 1/2. Functionally, catalyzes the transfer of a ribosyl phosphate group from 5-phosphoribose 1-diphosphate to orotate, leading to the formation of orotidine monophosphate (OMP). The protein is Orotate phosphoribosyltransferase of Listeria innocua serovar 6a (strain ATCC BAA-680 / CLIP 11262).